We begin with the raw amino-acid sequence, 127 residues long: Succinate dehydrogenase cytochrome b560 subunit (127 aa).

2 consecutive transmembrane segments (helical) span residues 36–53 and 60–83; these read VGLA…RIIL and NLLT…FILL. Position 88 (H88) interacts with heme. The helical transmembrane segment at 109–126 threads the bilayer; it reads LSKFSLFLLVSLSLILIF.

Belongs to the cytochrome b560 family. Forms part of complex II containing four subunits: a 70 kDa flavoprotein (FP), a 27 kDa iron-sulfur protein (IP), a cytochrome B and a membrane-anchoring protein. The cofactor is heme.

Its subcellular location is the mitochondrion inner membrane. Its pathway is carbohydrate metabolism; tricarboxylic acid cycle. In terms of biological role, membrane-anchoring subunit of succinate dehydrogenase (SDH) that is involved in complex II of the mitochondrial electron transport chain and is responsible for transferring electrons from succinate to ubiquinone (coenzyme Q). The protein is Succinate dehydrogenase cytochrome b560 subunit (SDH3) of Chondrus crispus (Carrageen Irish moss).